The following is a 4471-amino-acid chain: Dynein axonemal heavy chain 10 (4471 aa).

Residues 1–1793 are stem; sequence MVPEEVEVEI…NIRQCTGTFG (1793 aa). Residues 46–65 are disordered; sequence TESLGQPLNREDEEMDKEIS. Coiled-coil stretches lie at residues 203–223, 602–622, 1071–1106, and 1217–1245; these read NVQKFASNIQRTMQQLEGEIK, QEVKQKYLEVGRTMKEYEDRK, KLLNESAKEELYNLHEEMEHLAKNLRKIPNTLEDLK, and VELLGVYERELARHEKSRQELANAEKLFD. N-linked (GlcNAc...) asparagine glycosylation occurs at Asn-1074. The stretch at 1221-1254 is one TPR 1 repeat; that stretch reads GVYERELARHEKSRQELANAEKLFDLPITMYPEL. 4 AAA regions span residues 1794-2015, 2075-2294, 2417-2665, and 2765-3014; these read YGYE…VLVM, DAVE…VIVE, IHAP…VFNG, and EYNE…LRRS. Residues 1832–1839 carry the GPAGTGKT motif motif; that stretch reads GPAGTGKT. Residue 1832 to 1839 participates in ATP binding; sequence GPAGTGKT. The short motif at 1882–1888 is the CFDEFNR motif element; sequence CFDEFNR. ATP-binding positions include 2113-2120 and 2455-2462; these read GPTRGGKS and GESGTSKT. TPR repeat units lie at residues 2736-2769 and 2771-2797; these read MALHEGEPRIYEDIQDYEAAKALFQEILEEYNES and TKMNLVLFDDALEHLTRVHRIIRMDRG. Residues 2747 to 2770 are a coiled coil; sequence EDIQDYEAAKALFQEILEEYNESN. 2803-2810 contacts ATP; sequence GVGGSGKQ. Positions 3029-3313 are stalk; the sequence is YSKLLDEKTQ…QKLQEEAEIM (285 aa). Coiled-coil stretches lie at residues 3045–3131, 3257–3327, and 3567–3638; these read KRLD…LAEV, KREK…ISGL, and ERRE…EKTA. Residues 3399 to 3629 form an AAA 5 region; sequence LTDDVEISRW…TKSKATEVSE (231 aa). Residues 3802-3837 form a TPR 4 repeat; it reads WQEWYDLDSLEQFPVPLGYDNNITPFQKLLILRCFR. The tract at residues 3845 to 4062 is AAA 6; that stretch reads VTDYVTVTMG…FQVCMEILNT (218 aa). One copy of the TPR 5 repeat lies at 4074–4108; the sequence is RIPWGSLKYLIGEVMYGGRAIDSFDRRILTIYMDE. Residues 4235–4260 adopt a coiled-coil conformation; that stretch reads LLQELERFNKLVVRMTKSLAELQRAL.

The protein belongs to the dynein heavy chain family. In terms of assembly, consists of at least two heavy chains and a number of intermediate and light chains. In terms of tissue distribution, expressed primarily in trachea and testis, 2 tissues containing axonemal structures. Also expressed in brain but not in adult heart.

Its subcellular location is the cytoplasm. The protein localises to the cytoskeleton. It is found in the cilium axoneme. In terms of biological role, force generating protein of respiratory cilia. Produces force towards the minus ends of microtubules. Dynein has ATPase activity; the force-producing power stroke is thought to occur on release of ADP. Involved in sperm motility; implicated in sperm flagellar assembly. Probable inner arm dynein heavy chain. The chain is Dynein axonemal heavy chain 10 (DNAH10) from Homo sapiens (Human).